The primary structure comprises 333 residues: Adenosine deaminase (333 aa).

Zn(2+) contacts are provided by His12 and His14. Residues His14, Asp16, and Gly170 each coordinate substrate. His197 lines the Zn(2+) pocket. Residue Glu200 is the Proton donor of the active site. Asp278 contributes to the Zn(2+) binding site. Residue Asp279 coordinates substrate.

Belongs to the metallo-dependent hydrolases superfamily. Adenosine and AMP deaminases family. Adenosine deaminase subfamily. Requires Zn(2+) as cofactor.

The catalysed reaction is adenosine + H2O + H(+) = inosine + NH4(+). It carries out the reaction 2'-deoxyadenosine + H2O + H(+) = 2'-deoxyinosine + NH4(+). Functionally, catalyzes the hydrolytic deamination of adenosine and 2-deoxyadenosine. The chain is Adenosine deaminase from Proteus mirabilis (strain HI4320).